Consider the following 272-residue polypeptide: Oligodendrocyte transcription factor 3 (272 aa).

The span at methionine 1–serine 14 shows a compositional bias: low complexity. Residues methionine 1–lysine 71 are disordered. The span at aspartate 24–glutamine 33 shows a compositional bias: basic residues. Positions arginine 36–aspartate 46 are enriched in polar residues. A coiled-coil region spans residues serine 68–asparagine 89. Residues glutamine 83–leucine 137 enclose the bHLH domain.

Its subcellular location is the nucleus. Its function is as follows. May determine the distinct specification program of class A neurons in the dorsal part of the spinal cord and suppress specification of class B neurons. The polypeptide is Oligodendrocyte transcription factor 3 (OLIG3) (Homo sapiens (Human)).